Here is a 133-residue protein sequence, read N- to C-terminus: UPF0292 protein TGAM_1777 (133 aa).

Residues 20-100 (EGALIVEGLR…RVDVETRREL (81 aa)) form the Toprim domain. Mg(2+)-binding residues include Glu26, Asp69, and Asp71.

The protein belongs to the UPF0292 family. Mg(2+) is required as a cofactor.

The protein is UPF0292 protein TGAM_1777 of Thermococcus gammatolerans (strain DSM 15229 / JCM 11827 / EJ3).